A 468-amino-acid chain; its full sequence is Probable xyloglucan galactosyltransferase GT13 (468 aa).

Over 1 to 18 (MDKFNPKKEKTVKKRALK) the chain is Cytoplasmic. A helical; Signal-anchor for type II membrane protein transmembrane segment spans residues 19-35 (VLTEISPTPLFSMLFLL). Over 36-468 (HISQIATYLS…RVSLFKMTRI (433 aa)) the chain is Lumenal. N-linked (GlcNAc...) asparagine glycans are attached at residues Asn-53, Asn-116, Asn-153, Asn-240, and Asn-412.

The protein belongs to the glycosyltransferase 47 family. In terms of tissue distribution, expressed in roots, hypocotyls, cotyledons, leaves, stems, petals and carpels.

It localises to the golgi apparatus membrane. Functions in xyloglucan synthesis by adding side chains to the xylosylated glucan backbone. Involved in the galactosylation of hemicellulose xyloglucan. The polypeptide is Probable xyloglucan galactosyltransferase GT13 (Arabidopsis thaliana (Mouse-ear cress)).